A 255-amino-acid chain; its full sequence is 4-hydroxy-tetrahydrodipicolinate reductase (255 aa).

NAD(+) contacts are provided by residues 8-13 (GASGRM), 89-91 (GTT), and 114-117 (SSNY). H146 (proton donor/acceptor) is an active-site residue. H147 contacts (S)-2,3,4,5-tetrahydrodipicolinate. K150 functions as the Proton donor in the catalytic mechanism. 156 to 157 (GT) is a (S)-2,3,4,5-tetrahydrodipicolinate binding site.

Belongs to the DapB family.

Its subcellular location is the cytoplasm. The catalysed reaction is (S)-2,3,4,5-tetrahydrodipicolinate + NAD(+) + H2O = (2S,4S)-4-hydroxy-2,3,4,5-tetrahydrodipicolinate + NADH + H(+). The enzyme catalyses (S)-2,3,4,5-tetrahydrodipicolinate + NADP(+) + H2O = (2S,4S)-4-hydroxy-2,3,4,5-tetrahydrodipicolinate + NADPH + H(+). It participates in amino-acid biosynthesis; L-lysine biosynthesis via DAP pathway; (S)-tetrahydrodipicolinate from L-aspartate: step 4/4. Functionally, catalyzes the conversion of 4-hydroxy-tetrahydrodipicolinate (HTPA) to tetrahydrodipicolinate. In Methanoregula boonei (strain DSM 21154 / JCM 14090 / 6A8), this protein is 4-hydroxy-tetrahydrodipicolinate reductase.